The following is a 175-amino-acid chain: Ferritin light chain (175 aa).

The residue at position 2 (Ser2) is an N-acetylserine. The Ferritin-like diiron domain occupies 7–156 (QNYSTEVEAA…DHLTNIQRLV (150 aa)). 5 residues coordinate Fe cation: Glu54, Glu57, Glu58, Glu61, and Glu64. The interval 54-61 (ELAEEKRE) is catalytic site for iron oxidation.

The protein belongs to the ferritin family. Oligomer of 24 subunits. There are two types of subunits: L (light) chain and H (heavy) chain. The major chain can be light or heavy, depending on the species and tissue type. The functional molecule forms a roughly spherical shell with a diameter of 12 nm and contains a central cavity into which the insoluble mineral iron core is deposited. Interacts with NCOA4.

The protein localises to the cytoplasmic vesicle. The protein resides in the autophagosome. It localises to the cytoplasm. Its subcellular location is the autolysosome. Its function is as follows. Stores iron in a soluble, non-toxic, readily available form. Important for iron homeostasis. Iron is taken up in the ferrous form and deposited as ferric hydroxides after oxidation. Also plays a role in delivery of iron to cells. Mediates iron uptake in capsule cells of the developing kidney. Delivery to lysosomes by the cargo receptor NCOA4 for autophagic degradation and release or iron. The protein is Ferritin light chain (FTL) of Equus caballus (Horse).